Reading from the N-terminus, the 994-residue chain is cGMP-dependent protein kinase (994 aa).

A disordered region spans residues 1-162; sequence MGACISKNSS…QDDSHTEEEK (162 aa). Residue Gly-2 is the site of N-myristoyl glycine attachment. Cys-4 carries the S-palmitoyl cysteine lipid modification. Composition is skewed to low complexity over residues 9-22 and 33-46; these read SSAR…LSAS and GAAG…GAAE. Basic and acidic residues-rich tracts occupy residues 65–80 and 133–162; these read ELER…REEP and EGPK…EEEK. CNMP-binding domain stretches follow at residues 189-305, 308-407, 463-539, and 561-660; these read VCSS…FLAS, FFEM…RVLG, GIRF…ATLG, and IFRY…NEII. 3',5'-cyclic GMP is bound by residues Gly-253, Glu-254, Ala-256, Arg-263, and Ser-264. The 3',5'-cyclic GMP site is built by Arg-616, Gly-625, Glu-626, Ala-628, Arg-635, and Thr-636. The region spanning 684 to 941 is the Protein kinase domain; it reads LQVVRVVGRG…YKDIKEHAFF (258 aa). Residues 690–698 and Lys-713 contribute to the ATP site; that span reads VGRGTFGTV. Asp-807 acts as the Proton acceptor in catalysis. The 53-residue stretch at 942–994 folds into the AGC-kinase C-terminal domain; that stretch reads GDFDWDKLAGRGLPPPLAPKGETYAEDTEQSSFELDEDDTIVLEDEYDWDKDF. Residues 954–976 form a disordered region; it reads LPPPLAPKGETYAEDTEQSSFEL. The span at 965 to 976 shows a compositional bias: acidic residues; the sequence is YAEDTEQSSFEL.

Belongs to the protein kinase superfamily. AGC Ser/Thr protein kinase family. cGMP subfamily. The cofactor is Mg(2+).

It localises to the cytoplasm. The protein localises to the membrane. It is found in the cell membrane. The catalysed reaction is L-seryl-[protein] + ATP = O-phospho-L-seryl-[protein] + ADP + H(+). The enzyme catalyses L-threonyl-[protein] + ATP = O-phospho-L-threonyl-[protein] + ADP + H(+). Activated by cGMP. The cGMP-binding domains acts cooperatively to activate PKG. Inhibited by the antiparasitic small molecule 4-[2-(4-fluorophenyl)-5-(1-methylpiperidine-4-yl)-1Hpyrrol- 3-yl]pyridine (compound 1). Functionally, serine/threonine protein kinase which acts as a downstream effector of the second messenger cGMP. Plays an essential role in tachyzoite invasion of and egress from host cells. During invasion of host cells, regulates the apico-basal flux of F-actin probably via Ca(2+)-mediated activation of CDPK1. In tachyzoites, required for microneme secretion. Required for tachyzoite gliding motility. Plays an essential role in parasite invasion of and egress from host cells, and microneme secretion. In terms of biological role, dispensable for parasite invasion of and egress from host cells, and microneme secretion. This Toxoplasma gondii protein is cGMP-dependent protein kinase.